We begin with the raw amino-acid sequence, 429 residues long: Histidinol dehydrogenase (429 aa).

3 residues coordinate NAD(+): Tyr127, Gln188, and Asn211. Residues Ser234, Gln256, and His259 each contribute to the substrate site. The Zn(2+) site is built by Gln256 and His259. Active-site proton acceptor residues include Glu324 and His325. Substrate-binding residues include His325, Asp358, Glu412, and His417. Residue Asp358 participates in Zn(2+) binding. His417 contacts Zn(2+).

This sequence belongs to the histidinol dehydrogenase family. Zn(2+) serves as cofactor.

It catalyses the reaction L-histidinol + 2 NAD(+) + H2O = L-histidine + 2 NADH + 3 H(+). It participates in amino-acid biosynthesis; L-histidine biosynthesis; L-histidine from 5-phospho-alpha-D-ribose 1-diphosphate: step 9/9. Its function is as follows. Catalyzes the sequential NAD-dependent oxidations of L-histidinol to L-histidinaldehyde and then to L-histidine. This is Histidinol dehydrogenase from Bacillus thuringiensis subsp. konkukian (strain 97-27).